The following is a 482-amino-acid chain: L-propargylglycine--L-glutamate ligase (482 aa).

The enzyme catalyses L-propargylglycine + L-glutamate + ATP = L-gamma-glutamyl-L-propargylglycine + ADP + phosphate + H(+). It functions in the pathway amino-acid metabolism. Its pathway is antibiotic biosynthesis. In terms of biological role, involved in the biosynthesis of terminal alkyne-containing amino acids such as L-beta-ethynylserine, that are produced as antibiotics by S.cattleya. Catalyzes the ATP-dependent ligation of L-propargylglycine to L-glutamate to form the dipeptide L-gamma-glutamyl-L-propargylglycine. Is selective for L-propargylglycine over norvaline, allylglycine and the standard proteinogenic amino acids, except L-cysteine which can be used as a substrate to a lesser extent. This is L-propargylglycine--L-glutamate ligase from Streptantibioticus cattleyicolor (strain ATCC 35852 / DSM 46488 / JCM 4925 / NBRC 14057 / NRRL 8057) (Streptomyces cattleya).